We begin with the raw amino-acid sequence, 419 residues long: UDP-N-acetylglucosamine 1-carboxyvinyltransferase (419 aa).

Residue 22 to 23 (KN) participates in phosphoenolpyruvate binding. UDP-N-acetyl-alpha-D-glucosamine is bound at residue arginine 95. The active-site Proton donor is cysteine 119. Position 119 is a 2-(S-cysteinyl)pyruvic acid O-phosphothioketal (cysteine 119). UDP-N-acetyl-alpha-D-glucosamine-binding positions include 164–167 (KVSV), aspartate 308, and isoleucine 330.

It belongs to the EPSP synthase family. MurA subfamily.

It is found in the cytoplasm. It catalyses the reaction phosphoenolpyruvate + UDP-N-acetyl-alpha-D-glucosamine = UDP-N-acetyl-3-O-(1-carboxyvinyl)-alpha-D-glucosamine + phosphate. It functions in the pathway cell wall biogenesis; peptidoglycan biosynthesis. In terms of biological role, cell wall formation. Adds enolpyruvyl to UDP-N-acetylglucosamine. The sequence is that of UDP-N-acetylglucosamine 1-carboxyvinyltransferase from Rickettsia felis (strain ATCC VR-1525 / URRWXCal2) (Rickettsia azadi).